Consider the following 335-residue polypeptide: Probable nicotianamine synthase 2 (335 aa).

The protein belongs to the nicotianamine synthase (NAS)-like family.

It catalyses the reaction 3 S-adenosyl-L-methionine = nicotianamine + 3 S-methyl-5'-thioadenosine + 3 H(+). Its function is as follows. Synthesizes nicotianamine, a polyamine that is the first intermediate in the synthesis of the phytosiderophores of the mugineic acid type found in gramineae which serves as a sensor for the physiological iron status within the plant, and/or might be involved in the transport of iron. The sequence is that of Probable nicotianamine synthase 2 (NAS2) from Hordeum vulgare (Barley).